The chain runs to 1173 residues: Ubiquitin conjugation factor E4 B (1173 aa).

An N-acetylmethionine modification is found at Met-1. Positions 1 to 155 (MEELSADEIR…EPSSGPEVSE (155 aa)) are disordered. Low complexity predominate over residues 16 to 33 (RLAGGQTSQPTTPLTSPQ). Residues Ser-23 and Ser-31 each carry the phosphoserine modification. The segment covering 51-64 (QSLGLNVHNMTPAT) has biased composition (polar residues). The span at 76-99 (SQSSEGVSSLSSSPSNSLETQSQS) shows a compositional bias: low complexity. Phosphoserine is present on residues Ser-84, Ser-88, Ser-90, Ser-101, Ser-103, Ser-105, and Ser-124. Positions 134–147 (NDRREKRSLSDKEP) are enriched in basic and acidic residues. Residues Ser-238, Ser-674, and Ser-840 each carry the phosphoserine modification. Positions 928–948 (NKEQWDQLPRDQQQARQSQLA) are disordered. The segment covering 937-948 (RDQQQARQSQLA) has biased composition (low complexity). The region spanning 1098–1171 (DAPDEFRDPL…QAWMREKQSS (74 aa)) is the U-box domain. The residue at position 1136 (Ser-1136) is a Phosphoserine.

Belongs to the ubiquitin conjugation factor E4 family. As to quaternary structure, interacts with VCP. Interacts with STUB1/CHIP and UNC45B. Post-translationally, proteolytically cleaved by caspases during apoptosis. Cleaved efficiently at Asp-123 by caspase-6 and granzyme B. Cleaved with approximately 10-fold less efficiency at Asp-109 by caspase-3 and caspase-7. Expressed predominantly in neuronal tissues. Also detected in liver, heart, brain, kidney and testis.

It is found in the cytoplasm. It localises to the nucleus. The enzyme catalyses S-ubiquitinyl-[E2 ubiquitin-conjugating enzyme]-L-cysteine + [acceptor protein]-L-lysine = [E2 ubiquitin-conjugating enzyme]-L-cysteine + N(6)-ubiquitinyl-[acceptor protein]-L-lysine.. It functions in the pathway protein modification; protein ubiquitination. Functionally, ubiquitin-protein ligase that probably functions as an E3 ligase in conjunction with specific E1 and E2 ligases. May also function as an E4 ligase mediating the assembly of polyubiquitin chains on substrates ubiquitinated by another E3 ubiquitin ligase. May regulate myosin assembly in striated muscles together with STUB1 and VCP/p97 by targeting myosin chaperone UNC45B for proteasomal degradation. This Mus musculus (Mouse) protein is Ubiquitin conjugation factor E4 B.